A 377-amino-acid polypeptide reads, in one-letter code: Nitric oxide reductase FlRd-NAD(+) reductase (377 aa).

This sequence belongs to the FAD-dependent oxidoreductase family. It depends on FAD as a cofactor.

It localises to the cytoplasm. It catalyses the reaction 2 reduced [nitric oxide reductase rubredoxin domain] + NAD(+) + H(+) = 2 oxidized [nitric oxide reductase rubredoxin domain] + NADH. The protein operates within nitrogen metabolism; nitric oxide reduction. Its function is as follows. One of at least two accessory proteins for anaerobic nitric oxide (NO) reductase. Reduces the rubredoxin moiety of NO reductase. The polypeptide is Nitric oxide reductase FlRd-NAD(+) reductase (Shigella dysenteriae serotype 1 (strain Sd197)).